An 86-amino-acid polypeptide reads, in one-letter code: Candiduxin-1 (86 aa).

The first 21 residues, 1–21 (MKTLLLTLVVLTIACLDLGYT), serve as a signal peptide directing secretion. Disulfide bonds link C24–C45, C38–C62, C66–C78, and C79–C84.

This sequence belongs to the three-finger toxin family. Short-chain subfamily. Orphan group IX sub-subfamily. As to expression, expressed by the venom gland.

The protein localises to the secreted. The polypeptide is Candiduxin-1 (Bungarus candidus (Malayan krait)).